We begin with the raw amino-acid sequence, 375 residues long: Queuine tRNA-ribosyltransferase (375 aa).

Catalysis depends on Asp90, which acts as the Proton acceptor. Substrate is bound by residues 90–94 (DSGGF), Asp144, Gln190, and Gly217. Residues 248–254 (GIGTPHY) form an RNA binding region. The Nucleophile role is filled by Asp267. Residues 272–276 (TRIAR) are RNA binding; important for wobble base 34 recognition. Residues Cys305, Cys307, Cys310, and His336 each contribute to the Zn(2+) site.

The protein belongs to the queuine tRNA-ribosyltransferase family. Homodimer. Within each dimer, one monomer is responsible for RNA recognition and catalysis, while the other monomer binds to the replacement base PreQ1. The cofactor is Zn(2+).

It catalyses the reaction 7-aminomethyl-7-carbaguanine + guanosine(34) in tRNA = 7-aminomethyl-7-carbaguanosine(34) in tRNA + guanine. Its pathway is tRNA modification; tRNA-queuosine biosynthesis. In terms of biological role, catalyzes the base-exchange of a guanine (G) residue with the queuine precursor 7-aminomethyl-7-deazaguanine (PreQ1) at position 34 (anticodon wobble position) in tRNAs with GU(N) anticodons (tRNA-Asp, -Asn, -His and -Tyr). Catalysis occurs through a double-displacement mechanism. The nucleophile active site attacks the C1' of nucleotide 34 to detach the guanine base from the RNA, forming a covalent enzyme-RNA intermediate. The proton acceptor active site deprotonates the incoming PreQ1, allowing a nucleophilic attack on the C1' of the ribose to form the product. After dissociation, two additional enzymatic reactions on the tRNA convert PreQ1 to queuine (Q), resulting in the hypermodified nucleoside queuosine (7-(((4,5-cis-dihydroxy-2-cyclopenten-1-yl)amino)methyl)-7-deazaguanosine). The protein is Queuine tRNA-ribosyltransferase of Borrelia hermsii (strain HS1 / DAH).